The primary structure comprises 564 residues: Type 2 DNA topoisomerase 6 subunit B (564 aa).

Residues N46, D78, 99-100 (TK), 109-116 (GQQGIGIS), and K471 each bind ATP.

It belongs to the TOP6B family. Homodimer. Heterotetramer of two Top6A and two Top6B chains.

It carries out the reaction ATP-dependent breakage, passage and rejoining of double-stranded DNA.. Functionally, relaxes both positive and negative superturns and exhibits a strong decatenase activity. The chain is Type 2 DNA topoisomerase 6 subunit B from Pyrococcus abyssi (strain GE5 / Orsay).